The chain runs to 247 residues: 5'-nucleotidase SurE (247 aa).

Positions 8, 9, 39, and 91 each coordinate a divalent metal cation.

It belongs to the SurE nucleotidase family. The cofactor is a divalent metal cation.

It is found in the cytoplasm. It carries out the reaction a ribonucleoside 5'-phosphate + H2O = a ribonucleoside + phosphate. In terms of biological role, nucleotidase that shows phosphatase activity on nucleoside 5'-monophosphates. This Nitrosomonas europaea (strain ATCC 19718 / CIP 103999 / KCTC 2705 / NBRC 14298) protein is 5'-nucleotidase SurE.